The chain runs to 337 residues: tRNA N6-adenosine threonylcarbamoyltransferase (337 aa).

The Fe cation site is built by His114 and His118. Substrate-binding positions include 136–140 (LVSGG), Asp169, Gly182, Asp186, and Asn275. Asp301 is a binding site for Fe cation.

Belongs to the KAE1 / TsaD family. It depends on Fe(2+) as a cofactor.

Its subcellular location is the cytoplasm. The enzyme catalyses L-threonylcarbamoyladenylate + adenosine(37) in tRNA = N(6)-L-threonylcarbamoyladenosine(37) in tRNA + AMP + H(+). Required for the formation of a threonylcarbamoyl group on adenosine at position 37 (t(6)A37) in tRNAs that read codons beginning with adenine. Is involved in the transfer of the threonylcarbamoyl moiety of threonylcarbamoyl-AMP (TC-AMP) to the N6 group of A37, together with TsaE and TsaB. TsaD likely plays a direct catalytic role in this reaction. The polypeptide is tRNA N6-adenosine threonylcarbamoyltransferase (Streptococcus uberis (strain ATCC BAA-854 / 0140J)).